A 439-amino-acid polypeptide reads, in one-letter code: MKSVATSSLDDVDKDSVPLGSSINGTAQAETPLENVIDVESVRSHFPVLGGETAAFNNASGTVVLKEAIESTSNFMYSFPFPPGVDAKSMEAITAYTGNKGKVAAFINALPDEITFGQSTTCLFRLLGLSLKPMLNNDCEIVCSTLCHEAAASAWIHLSRELGITIKWWSPTTTPNSPDDPVLTTDSLKPLLSPKTRLVTCNHVSNVVGTIHPIREIADVVHTIPGCMLIVDGVACVPHRPVDVKELDVDFYCFSWYKLFGPHLGTLYASRKAQDRYMTSINHYFVSSSSLDGKLALGMPSFELQLMCSPIVSYLQDTVGWDRIVRQETVLVTILLEYLLSKPSVYRVFGRRNSDPSQRVAIVTFEVVGRSSGDVAMRVNTRNRFRITSGICLAPRPTWDVLKPKSSDGLVRVSFVHYNTVEEVRAFCSELDEIVTRDT.

Positions 1–25 (MKSVATSSLDDVDKDSVPLGSSING) are disordered. Pyridoxal 5'-phosphate contacts are provided by residues 120-121 (TT), Asn-206, and 255-257 (SWY). Lys-258 is modified (N6-(pyridoxal phosphate)lysine).

It belongs to the class-V pyridoxal-phosphate-dependent aminotransferase family. Requires pyridoxal 5'-phosphate as cofactor.

It participates in mycotoxin biosynthesis. Its function is as follows. Cysteine desulfurase-like protein; part of the gene cluster that mediates the biosynthesis of the secondary metabolite ustiloxin B, an antimitotic tetrapeptide. First, ustA is processed by the subtilisin-like endoprotease Kex2 that is outside the ustiloxin B gene cluster, at the C-terminal side of Arg-Lys, after transfer to Golgi apparatus through the endoplasmic reticulum (ER). Cleavage by KEX2 generates 16 peptides YAIG-I to YAIG-XVI. To process the precursor peptide further, at least two peptidases are necessary to cleave the N-terminal and C-terminal sides of the Tyr-Ala-Ile-Gly core peptide which serves as backbone for the synthesis of ustiloxin B, through cyclization and modification of the tyrosine with a non-protein coding amino acid, norvaline. One of the two peptidases must be the serine peptidase ustP; and the other pepdidase is probably ustH. Macrocyclization of the core peptide derived from ustA requires the tyrosinase ustQ, as well as the homologous oxidases ustYa and ustYb, and leads to the production of the first cyclization product N-desmethylustiloxin F. For the formation of N-desmethylustiloxin F, three oxidation steps are required, hydroxylation at the benzylic position, hydroxylation at either the aromatic ring of Tyr or beta-position of Ile, and oxidative cyclization. UstQ may catalyze the oxidation of a phenol moiety, whereas the ustYa and ustYb are most likely responsible for the remaining two-step oxidations. N-desmethylustiloxin F is then methylated by ustM to yield ustiloxin F which in turn substrate of the cytochrome P450 monooxygenase ustC which catalyzes the formation of S-deoxyustiloxin H. The flavoprotein monooxygenases ustF1 and ustF2 then participate in the modification of the side chain of S-deoxyustiloxin H, leading to the synthesis of an oxime intermediate, via ustiloxin H. Finally, carboxylative dehydration performed by the cysteine desulfurase-like protein ustD yields ustiloxin B. The protein is Cysteine desulfurase-like protein ustD of Aspergillus flavus (strain ATCC 200026 / FGSC A1120 / IAM 13836 / NRRL 3357 / JCM 12722 / SRRC 167).